The sequence spans 156 residues: Protein OXIDATIVE STRESS 3 LIKE 3 (156 aa).

The segment at 1–67 (MHYQEQMESL…GLSKHYKGKS (67 aa)) is disordered. The segment covering 13-26 (GEERRRGNYTRDVD) has biased composition (basic and acidic residues).

The protein resides in the nucleus. In terms of biological role, promotes slightly the tolerance to oxidizing chemicals (e.g. diamide). The sequence is that of Protein OXIDATIVE STRESS 3 LIKE 3 from Arabidopsis thaliana (Mouse-ear cress).